The following is a 448-amino-acid chain: 3-phosphoshikimate 1-carboxyvinyltransferase (448 aa).

Lys-38, Ser-39, and Arg-43 together coordinate 3-phosphoshikimate. A phosphoenolpyruvate-binding site is contributed by Lys-38. Phosphoenolpyruvate is bound by residues Gly-111 and Arg-140. 3-phosphoshikimate contacts are provided by Ser-185, Gln-187, Asp-335, and Lys-362. Gln-187 is a phosphoenolpyruvate binding site. Residue Asp-335 is the Proton acceptor of the active site. Residues Arg-366 and Arg-408 each coordinate phosphoenolpyruvate.

This sequence belongs to the EPSP synthase family. Monomer.

The protein resides in the cytoplasm. It catalyses the reaction 3-phosphoshikimate + phosphoenolpyruvate = 5-O-(1-carboxyvinyl)-3-phosphoshikimate + phosphate. Its pathway is metabolic intermediate biosynthesis; chorismate biosynthesis; chorismate from D-erythrose 4-phosphate and phosphoenolpyruvate: step 6/7. Functionally, catalyzes the transfer of the enolpyruvyl moiety of phosphoenolpyruvate (PEP) to the 5-hydroxyl of shikimate-3-phosphate (S3P) to produce enolpyruvyl shikimate-3-phosphate and inorganic phosphate. This Gloeothece citriformis (strain PCC 7424) (Cyanothece sp. (strain PCC 7424)) protein is 3-phosphoshikimate 1-carboxyvinyltransferase.